Consider the following 221-residue polypeptide: Glutathione peroxidase 6 (221 aa).

The first 19 residues, 1–19 (MFQQFQASCLVLFFLVGFA), serve as a signal peptide directing secretion. The active site involves Sec73. Sec73 is a non-standard amino acid (selenocysteine).

This sequence belongs to the glutathione peroxidase family. In terms of tissue distribution, expressed in olfactory epithelium and embryos.

It is found in the secreted. It carries out the reaction 2 glutathione + H2O2 = glutathione disulfide + 2 H2O. This chain is Glutathione peroxidase 6 (GPX6), found in Homo sapiens (Human).